A 199-amino-acid polypeptide reads, in one-letter code: MPNYKLLYFNMRGRAEIIRYIFAYLDIKYEDHRIEQADWPKIKPTLPFGKIPVLEVEGLTIHQSLAIARYLTKNTDLAGKTALEQCQADAVVDTLDDFMSLFPWAEKDQDLKERMFNELLTHQAPRLLKDLDTYLGDKEWFIGNYVTWADFYWDICSTTLLVLKPGLLDIYPKLVSLRNKVQAIPAISAWILKRPQTKL.

Positions 2-79 (PNYKLLYFNM…YLTKNTDLAG (78 aa)) constitute a GST N-terminal domain. Residues Y8, R14, W39, 49 to 51 (GKI), and 63 to 64 (QS) each bind glutathione. One can recognise a GST C-terminal domain in the interval 81–199 (TALEQCQADA…WILKRPQTKL (119 aa)).

The protein belongs to the GST superfamily. Sigma family. Homodimer. It depends on glutathione as a cofactor. Expressed in skin and oviduct.

It is found in the cytoplasm. The enzyme catalyses prostaglandin H2 = prostaglandin D2. The catalysed reaction is RX + glutathione = an S-substituted glutathione + a halide anion + H(+). It catalyses the reaction 2-glyceryl-prostaglandin H2 = 2-glyceryl-prostaglandin D2. Functionally, bifunctional enzyme which catalyzes both the conversion of PGH2 to PGD2, a prostaglandin involved in smooth muscle contraction/relaxation and a potent inhibitor of platelet aggregation, and the conjugation of glutathione with a wide range of aryl halides and organic isothiocyanates. Also exhibits low glutathione-peroxidase activity. This Mus musculus (Mouse) protein is Hematopoietic prostaglandin D synthase.